The chain runs to 916 residues: Protein translocase subunit SecA (916 aa).

Residues Gln87, 105–109 (GEGKT), and Asp507 each bind ATP. The Zn(2+) site is built by Cys900, Cys902, Cys911, and His912.

This sequence belongs to the SecA family. As to quaternary structure, monomer and homodimer. Part of the essential Sec protein translocation apparatus which comprises SecA, SecYEG and auxiliary proteins SecDF-YajC and YidC. The cofactor is Zn(2+).

The protein resides in the cell inner membrane. Its subcellular location is the cytoplasm. The catalysed reaction is ATP + H2O + cellular proteinSide 1 = ADP + phosphate + cellular proteinSide 2.. Functionally, part of the Sec protein translocase complex. Interacts with the SecYEG preprotein conducting channel. Has a central role in coupling the hydrolysis of ATP to the transfer of proteins into and across the cell membrane, serving both as a receptor for the preprotein-SecB complex and as an ATP-driven molecular motor driving the stepwise translocation of polypeptide chains across the membrane. This is Protein translocase subunit SecA from Neisseria gonorrhoeae (strain ATCC 700825 / FA 1090).